We begin with the raw amino-acid sequence, 445 residues long: Argininosuccinate synthase (445 aa).

ATP is bound by residues 17 to 25 (AFSGGLDTS) and A43. Y99 lines the L-citrulline pocket. Residues G129 and T131 each contribute to the ATP site. Residues T131, N135, and D136 each coordinate L-aspartate. N135 is an L-citrulline binding site. D136 is a binding site for ATP. R139 and S192 together coordinate L-citrulline. D194 contacts ATP. Positions 201, 203, and 280 each coordinate L-citrulline.

This sequence belongs to the argininosuccinate synthase family. Type 2 subfamily. In terms of assembly, homotetramer.

The protein resides in the cytoplasm. The enzyme catalyses L-citrulline + L-aspartate + ATP = 2-(N(omega)-L-arginino)succinate + AMP + diphosphate + H(+). The protein operates within amino-acid biosynthesis; L-arginine biosynthesis; L-arginine from L-ornithine and carbamoyl phosphate: step 2/3. The protein is Argininosuccinate synthase of Bordetella petrii (strain ATCC BAA-461 / DSM 12804 / CCUG 43448).